Here is a 62-residue protein sequence, read N- to C-terminus: Chromatin protein Cren7 (62 aa).

It belongs to the Cren7 family. Monomer. Post-translationally, methylated at multiple sites, to varying extents.

It is found in the chromosome. The protein resides in the cytoplasm. In terms of biological role, a chromatin protein, binds double-stranded DNA without sequence specificity. Constrains negative DNA supercoils. The protein is Chromatin protein Cren7 of Staphylothermus marinus (strain ATCC 43588 / DSM 3639 / JCM 9404 / F1).